Consider the following 103-residue polypeptide: Small ribosomal subunit protein uS10 (103 aa).

This sequence belongs to the universal ribosomal protein uS10 family. Part of the 30S ribosomal subunit.

Involved in the binding of tRNA to the ribosomes. This Ruminiclostridium cellulolyticum (strain ATCC 35319 / DSM 5812 / JCM 6584 / H10) (Clostridium cellulolyticum) protein is Small ribosomal subunit protein uS10.